A 283-amino-acid chain; its full sequence is Nudix hydrolase 6 (283 aa).

In terms of domain architecture, Nudix hydrolase spans 101 to 233 (SHRIGVGAFV…KKELFRFMAN (133 aa)). The short motif at 139 to 160 (GVVKEGENIWEGALREVEEETG) is the Nudix box element. A divalent metal cation contacts are provided by glutamate 154, glutamate 158, and glutamate 204.

It belongs to the Nudix hydrolase family. Mg(2+) is required as a cofactor. Mn(2+) serves as cofactor. In terms of tissue distribution, expressed in stems and leaves. Weakly or not expressed in roots.

It catalyses the reaction ADP-D-ribose + H2O = D-ribose 5-phosphate + AMP + 2 H(+). The enzyme catalyses NAD(+) + H2O = beta-nicotinamide D-ribonucleotide + AMP + 2 H(+). The catalysed reaction is NADH + H2O = reduced beta-nicotinamide D-ribonucleotide + AMP + 2 H(+). Probably mediates the hydrolysis of some nucleoside diphosphate derivatives. In vitro, it can use both NADH and ADP-ribose as substrates; however the relevance of such substrates in vivo is unclear. This chain is Nudix hydrolase 6, found in Arabidopsis thaliana (Mouse-ear cress).